The primary structure comprises 608 residues: Glutamine--fructose-6-phosphate aminotransferase [isomerizing] (608 aa).

C2 (nucleophile; for GATase activity) is an active-site residue. The Glutamine amidotransferase type-2 domain occupies 2 to 217 (CGIVGILGRG…DGDWAVLTRA (216 aa)). SIS domains lie at 284 to 423 (LPFD…ERGK) and 456 to 598 (LARY…VDQP). K603 acts as the For Fru-6P isomerization activity in catalysis.

Its subcellular location is the cytoplasm. The enzyme catalyses D-fructose 6-phosphate + L-glutamine = D-glucosamine 6-phosphate + L-glutamate. Its function is as follows. Involved in the production of the root hair deformation (HAD) factor specifically on soybean. This is Glutamine--fructose-6-phosphate aminotransferase [isomerizing] (nodM) from Bradyrhizobium diazoefficiens (strain JCM 10833 / BCRC 13528 / IAM 13628 / NBRC 14792 / USDA 110).